Here is a 629-residue protein sequence, read N- to C-terminus: MQYHDQFDVIVVGGGHAGTEAATAAARMGMKTLLLTHNIETLGHMSCNPAIGGIGKGHLVKEVDAMGGIMAQAIDHAGIQFRILNSSKGPAVRATRAQADRLLYKQTIRHTLENYPNLQLFQQACDDLILEGDRVCGVVTQAGIRILSKTVVLTAGTFLNGLIHIGMEHYRGGRSGDPASVTLAERMREMPLRVGRLKTGTPPRIDARSVDFSQLQMQLGDDPVPVFSYLGKPEQHPRQVPCFITHTNVQTHDVIRANLDRSPMYAGVIEGIGPRYCPSIEDKIMRFADKDAHQIFIEPEGLTTHELYPNGISTSLPFDVQVQIVRSMKGFANAHIARPGYAIEYDFFDPRDLKPNMENKCLQNLFFAGQINGTTGYEEAAAQGMLAGINAALRAQDKDPWAPRRDQAYIGVLMDDLSTLGTKEPYRMFTSRAEYRLLLREDNADLRLTPVGRELGLVNDERWAFFNHKLEMMAQEQQRLQDTWIQPQHPATEGLNKILKTPLSRPASLEDLLRRPEVNYQDLMAIEGVGPGIEHPQASEQIEIQVKYAGYIDRQQDEIDKQLRHEETLLPLDLDYSEVPGLSKEVCIKLNDTKPQTIGQASRISGVTPAAISILLVHLKKRGLLRKSA.

An FAD-binding site is contributed by 13-18 (GGGHAG). 273–287 (GPRYCPSIEDKIMRF) is a binding site for NAD(+).

Belongs to the MnmG family. Homodimer. Heterotetramer of two MnmE and two MnmG subunits. The cofactor is FAD.

It is found in the cytoplasm. In terms of biological role, NAD-binding protein involved in the addition of a carboxymethylaminomethyl (cmnm) group at the wobble position (U34) of certain tRNAs, forming tRNA-cmnm(5)s(2)U34. The protein is tRNA uridine 5-carboxymethylaminomethyl modification enzyme MnmG of Tolumonas auensis (strain DSM 9187 / NBRC 110442 / TA 4).